We begin with the raw amino-acid sequence, 682 residues long: DNA ligase (682 aa).

Residues 42-46, 91-92, and glutamate 124 each bind NAD(+); these read DAEYD and SL. The active-site N6-AMP-lysine intermediate is lysine 126. Residues arginine 147, glutamate 184, lysine 302, and lysine 326 each contribute to the NAD(+) site. Positions 420, 423, 438, and 444 each coordinate Zn(2+). Residues 603 to 682 enclose the BRCT domain; it reads IADNPLKGKS…QEFIALTGEN (80 aa).

This sequence belongs to the NAD-dependent DNA ligase family. LigA subfamily. It depends on Mg(2+) as a cofactor. The cofactor is Mn(2+).

It catalyses the reaction NAD(+) + (deoxyribonucleotide)n-3'-hydroxyl + 5'-phospho-(deoxyribonucleotide)m = (deoxyribonucleotide)n+m + AMP + beta-nicotinamide D-nucleotide.. DNA ligase that catalyzes the formation of phosphodiester linkages between 5'-phosphoryl and 3'-hydroxyl groups in double-stranded DNA using NAD as a coenzyme and as the energy source for the reaction. It is essential for DNA replication and repair of damaged DNA. The sequence is that of DNA ligase from Actinobacillus pleuropneumoniae serotype 3 (strain JL03).